The primary structure comprises 149 residues: MVPVNPALPGRSYPPTPPYLVAREKIREFASAVFATNPISFDVEAARAAGHADLVGPPTFPIVVQEYTLQQLLADPEAGIDFSRVVHGDQRFTYTRAVVAGDQLTATMTVTSVKSLGAHSMVTAESMIVDAGGEHVVTAISTLVVRGDE.

The protein belongs to the UPF0336 family.

This is UPF0336 protein Lxx02810 from Leifsonia xyli subsp. xyli (strain CTCB07).